Reading from the N-terminus, the 258-residue chain is Imidazole glycerol phosphate synthase subunit HisF (258 aa).

Active-site residues include aspartate 11 and aspartate 130.

It belongs to the HisA/HisF family. In terms of assembly, heterodimer of HisH and HisF.

The protein resides in the cytoplasm. The catalysed reaction is 5-[(5-phospho-1-deoxy-D-ribulos-1-ylimino)methylamino]-1-(5-phospho-beta-D-ribosyl)imidazole-4-carboxamide + L-glutamine = D-erythro-1-(imidazol-4-yl)glycerol 3-phosphate + 5-amino-1-(5-phospho-beta-D-ribosyl)imidazole-4-carboxamide + L-glutamate + H(+). Its pathway is amino-acid biosynthesis; L-histidine biosynthesis; L-histidine from 5-phospho-alpha-D-ribose 1-diphosphate: step 5/9. In terms of biological role, IGPS catalyzes the conversion of PRFAR and glutamine to IGP, AICAR and glutamate. The HisF subunit catalyzes the cyclization activity that produces IGP and AICAR from PRFAR using the ammonia provided by the HisH subunit. In Serratia proteamaculans (strain 568), this protein is Imidazole glycerol phosphate synthase subunit HisF.